The following is a 289-amino-acid chain: Delta-sarcoglycan (289 aa).

The Cytoplasmic portion of the chain corresponds to 1–37; sequence MPQEQYSHHRSTMPSSEGPHIYKVGIYGWRKRCLYFF. A helical; Signal-anchor for type II membrane protein membrane pass occupies residues 38–56; sequence VLLLMILILVNLAMTIWIL. At 57-289 the chain is on the extracellular side; the sequence is KVMNFTIDGM…TCQINTSVCL (233 aa). 2 N-linked (GlcNAc...) asparagine glycosylation sites follow: asparagine 60 and asparagine 108. 2 disulfides stabilise this stretch: cysteine 263–cysteine 288 and cysteine 265–cysteine 281. Residue asparagine 284 is glycosylated (N-linked (GlcNAc...) asparagine).

It belongs to the sarcoglycan beta/delta/gamma/zeta family. In terms of assembly, interacts with FLNC. Cross-link to form 2 major subcomplexes: one consisting of SGCB, SGCD and SGCG and the other consisting of SGCB and SGCD. The association between SGCB and SGCG is particularly strong while SGCA is loosely associated with the other sarcoglycans. Interacts with DAG1. Disulfide bonds are present. As to expression, most strongly expressed in skeletal and heart muscle. Also detected in proliferating myoblasts.

The protein resides in the cell membrane. It is found in the sarcolemma. Its subcellular location is the cytoplasm. The protein localises to the cytoskeleton. In terms of biological role, component of the sarcoglycan complex, a subcomplex of the dystrophin-glycoprotein complex which forms a link between the F-actin cytoskeleton and the extracellular matrix. The protein is Delta-sarcoglycan (Sgcd) of Mus musculus (Mouse).